The sequence spans 362 residues: Peptide chain release factor 1 (362 aa).

Residue Gln240 is modified to N5-methylglutamine.

Belongs to the prokaryotic/mitochondrial release factor family. Post-translationally, methylated by PrmC. Methylation increases the termination efficiency of RF1.

The protein resides in the cytoplasm. Its function is as follows. Peptide chain release factor 1 directs the termination of translation in response to the peptide chain termination codons UAG and UAA. This is Peptide chain release factor 1 from Bifidobacterium longum subsp. infantis (strain ATCC 15697 / DSM 20088 / JCM 1222 / NCTC 11817 / S12).